The following is a 66-amino-acid chain: Large ribosomal subunit protein bL35 (66 aa).

It belongs to the bacterial ribosomal protein bL35 family.

In Afipia carboxidovorans (strain ATCC 49405 / DSM 1227 / KCTC 32145 / OM5) (Oligotropha carboxidovorans), this protein is Large ribosomal subunit protein bL35.